Reading from the N-terminus, the 152-residue chain is UPF0266 membrane protein Ent638_2389 (152 aa).

3 helical membrane-spanning segments follow: residues 6-26, 45-65, and 67-87; these read IVLVLFIVALLAYAFYDEFIM, VDAFIFAGLLAILIYNNVMSQ, and ALLTTWLLCVLALMAFYLFWI.

This sequence belongs to the UPF0266 family.

The protein resides in the cell inner membrane. The protein is UPF0266 membrane protein Ent638_2389 of Enterobacter sp. (strain 638).